Consider the following 234-residue polypeptide: uncharacterized protein (234 aa).

2 disordered regions span residues 1–65 (MTSV…RRGP) and 182–234 (ARGA…GRKT).

This is an uncharacterized protein from Homo sapiens (Human).